A 425-amino-acid chain; its full sequence is MLITSIEAHEILDSRGNPTVEAQVALENGTTGSAIVPSGASTGEKEAVELRDSDPKRYGGKGVLSAVANVNDSIAPEIIGMEVTDQRSIDRKMIEIDGTANKATLGANAILAVSMAVARTAALSLGLPLYRYLGGTNASLLPVPCMNVINGGKHADNTVDFQEFMIAPHNAPNFAEALRMGAETFHALKSILRGKGYSTGVGDEGGFAPDLKSNEEAVEVILLAIEKAGYRPGEDISICLDPATSEMWKDGKYLFFKSDQSTKTSEEMVDLWASWAGQYPIVSLEDGMGENDWEGWKMLTDRIGATVELVGDDLFCTNAKILAEGIEKGVANSILIKLNQIGSVSETLDTIELAVKHNYKCFVSHRSGETEDTTIADLTVATAAGQIKTGSGCRSERVAKFNQLLRIERQLGEAARFAGKSAFAR.

The segment at 31–54 (TGSAIVPSGASTGEKEAVELRDSD) is disordered. The segment covering 43 to 54 (GEKEAVELRDSD) has biased composition (basic and acidic residues). Q162 lines the (2R)-2-phosphoglycerate pocket. Residue E204 is the Proton donor of the active site. Mg(2+) contacts are provided by D241, E285, and D312. The (2R)-2-phosphoglycerate site is built by K337, R366, S367, and K388. Catalysis depends on K337, which acts as the Proton acceptor.

This sequence belongs to the enolase family. It depends on Mg(2+) as a cofactor.

The protein resides in the cytoplasm. Its subcellular location is the secreted. It is found in the cell surface. It catalyses the reaction (2R)-2-phosphoglycerate = phosphoenolpyruvate + H2O. It participates in carbohydrate degradation; glycolysis; pyruvate from D-glyceraldehyde 3-phosphate: step 4/5. Its function is as follows. Catalyzes the reversible conversion of 2-phosphoglycerate (2-PG) into phosphoenolpyruvate (PEP). It is essential for the degradation of carbohydrates via glycolysis. In Gloeobacter violaceus (strain ATCC 29082 / PCC 7421), this protein is Enolase.